Reading from the N-terminus, the 196-residue chain is Holliday junction resolvase RecU (196 aa).

Thr82, Asp84, Glu97, and Gln116 together coordinate Mg(2+).

Belongs to the RecU family. Mg(2+) serves as cofactor.

Its subcellular location is the cytoplasm. It catalyses the reaction Endonucleolytic cleavage at a junction such as a reciprocal single-stranded crossover between two homologous DNA duplexes (Holliday junction).. Its function is as follows. Endonuclease that resolves Holliday junction intermediates in genetic recombination. Cleaves mobile four-strand junctions by introducing symmetrical nicks in paired strands. Promotes annealing of linear ssDNA with homologous dsDNA. Required for DNA repair, homologous recombination and chromosome segregation. The polypeptide is Holliday junction resolvase RecU (Oceanobacillus iheyensis (strain DSM 14371 / CIP 107618 / JCM 11309 / KCTC 3954 / HTE831)).